Reading from the N-terminus, the 515-residue chain is Methionine--tRNA ligase (515 aa).

The short motif at 13 to 23 (AYPNGKPHIGH) is the 'HIGH' region element. The short motif at 300–304 (KMSKS) is the 'KMSKS' region element. An ATP-binding site is contributed by lysine 303.

The protein belongs to the class-I aminoacyl-tRNA synthetase family. MetG type 2B subfamily. In terms of assembly, monomer.

It is found in the cytoplasm. It carries out the reaction tRNA(Met) + L-methionine + ATP = L-methionyl-tRNA(Met) + AMP + diphosphate. In terms of biological role, is required not only for elongation of protein synthesis but also for the initiation of all mRNA translation through initiator tRNA(fMet) aminoacylation. This Brucella suis biovar 1 (strain 1330) protein is Methionine--tRNA ligase.